Reading from the N-terminus, the 729-residue chain is MLFNSVLRQPQLGVLRNGWSSHYPLQSLLSGYQCNCNDEHTSYGETGVPVPPFGCTFCTAPSMEHILAVANEEGFVRLYNTESQTSKKTCFKEWMAHWNAVFDLAWVPGELKLVTAAGDQTAKFWDVRAGELMGTCKGHQCSLKSVAFPKFQKAVFSTGGRDGNIMIWDTRCNKKDGFYRQVNQISGAHNTADKQTPSKPKKKQNSKGLAPAVDSQQSVTVVLFQDENTLVSAGAVDGIIKVWDLRKNYTAYRQEPIASKSFLYPGTSTRKLGYSSLVLDSTGSTLFANCTDDNIYMFNMTGLKTSPVAVFNGHQNSTFYVKSSLSPDDQFLISGSSDEAAYIWKVSMPWHPPTVLLGHSQEVTSVCWCPSDFTKIATCSDDNTLKIWRLNRGLEEKPGDKHSIVGWTSQKKKEVKACPVTVPSSQSTPAKAPRAKSSPSISSPSSAACTPSCAGDLPLPSSTPTFSVKTTPATTRSSVSRRGSISSVSPKPLSSFKMSLRNWVTRTPSSSPPVTPPASETKISSPRKALIPVSQKSSQADACSESRNRVKRRLDSSCLESVKQKCVKSCNCVTELDGQAESLRLDLCCLSGTQEVLSQDSEGPTKSSKTEGAGTSISEPPSPVSPYASEGCGPLPLPLRPCGEGSEMVGKENSSPENKNWLLAIAAKRKAENSSPRSPSSQTPSSRRQSGKTSPGPVTITPSSMRKICTYFRRKTQDDFCSPEHSTEL.

N-acetylmethionine is present on Met-1. WD repeat units lie at residues 47–89, 96–135, and 138–178; these read GVPV…SKKT, AHWNAVFDLAWVPGELKLVTAAGDQTAKFWDVRAGELMGT, and GHQC…KDGF. A DDB1-binding motif motif is present at residues 168–171; sequence WDTR. The segment covering 189-198 has biased composition (polar residues); the sequence is HNTADKQTPS. Residues 189 to 212 form a disordered region; it reads HNTADKQTPSKPKKKQNSKGLAPA. Position 196 is a phosphothreonine (Thr-196). The Nuclear localization signal motif lies at 197-203; it reads PSKPKKK. 4 WD repeats span residues 214-253, 269-308, 313-354, and 358-398; these read DSQQSVTVVLFQDENTLVSAGAVDGIIKVWDLRKNYTAYR, TRKLGYSSLVLDSTGSTLFANCTDDNIYMFNMTGLKTSPV, GHQN…HPPT, and GHSQ…EEKP. The short motif at 243-246 is the DDB1-binding motif element; that stretch reads WDLR. A phosphoserine mark is found at Ser-409 and Ser-425. Disordered regions lie at residues 416–445 and 460–491; these read KACPVTVPSSQSTPAKAPRAKSSPSISSPS and PSSTPTFSVKTTPATTRSSVSRRGSISSVSPK. Low complexity predominate over residues 427 to 445; that stretch reads STPAKAPRAKSSPSISSPS. The segment covering 460–475 has biased composition (polar residues); the sequence is PSSTPTFSVKTTPATT. At Thr-463 the chain carries Phosphothreonine; by CDK1 and CDK2. Residues 476–491 show a composition bias toward low complexity; that stretch reads RSSVSRRGSISSVSPK. Phosphoserine is present on residues Ser-484, Ser-489, Ser-494, and Ser-511. A disordered region spans residues 504-546; the sequence is VTRTPSSSPPVTPPASETKISSPRKALIPVSQKSSQADACSES. Thr-515 is modified (phosphothreonine). Ser-556 carries the post-translational modification Phosphoserine. A compositionally biased stretch (polar residues) spans 596–607; sequence VLSQDSEGPTKS. The segment at 596-705 is disordered; it reads VLSQDSEGPT…GPVTITPSSM (110 aa). Composition is skewed to low complexity over residues 630 to 645 and 674 to 688; these read EGCGPLPLPLRPCGEG and SSPRSPSSQTPSSRR. Ser-675 and Ser-678 each carry phosphoserine. Phosphothreonine is present on residues Thr-683 and Thr-701.

The protein belongs to the WD repeat cdt2 family. Component of the DCX(DTL) E3 ubiquitin ligase complex (also called CRL4(CDT2)), at least composed of CUL4 (CUL4A or CUL4B), DDB1, DTL/CDT2 and RBX1. Interacts with CDKN1A and DDB1. Interacts with FBXO11; SCF(FBXWO11) controls DTL stability but DCX(DTL) does not control FBXO11 stability. Interacts with CRY1. In terms of processing, ubiquitinated by the anaphase promoting complex/cyclosome (APC/C). Autoubiquitinated through 'Lys-48'-polyubiquitin chains in a PCNA-independent reaction, allowing proteasomal turnover. Polyubiquitinated by SCF(FBXO11) when not phosphorylated, leading to its degradation. A tight regulation of the polyubiquitination by SCF(FBXO11) is involved in the control of different processes such as TGF-beta signaling, cell cycle progression and exit. Phosphorylated at Thr-463 by CDK1/Cyclin B and CDK2/Cycnlin A but not by CDK2/Cyclin E, MAPK1 or PLK1. Phosphorylation at Thr-463 inhibits the interaction with FBXO11 and decreases upon cell cycle exit induced by TGF-beta or serum starvation.

It is found in the nucleus. It localises to the nucleus membrane. The protein resides in the cytoplasm. The protein localises to the cytoskeleton. Its subcellular location is the microtubule organizing center. It is found in the centrosome. It localises to the chromosome. The protein operates within protein modification; protein ubiquitination. Its function is as follows. Substrate-specific adapter of a DCX (DDB1-CUL4-X-box) E3 ubiquitin-protein ligase complex required for cell cycle control, DNA damage response and translesion DNA synthesis. The DCX(DTL) complex, also named CRL4(CDT2) complex, mediates the polyubiquitination and subsequent degradation of CDT1, CDKN1A/p21(CIP1), FBH1, KMT5A and SDE2. CDT1 degradation in response to DNA damage is necessary to ensure proper cell cycle regulation of DNA replication. CDKN1A/p21(CIP1) degradation during S phase or following UV irradiation is essential to control replication licensing. KMT5A degradation is also important for a proper regulation of mechanisms such as TGF-beta signaling, cell cycle progression, DNA repair and cell migration. Most substrates require their interaction with PCNA for their polyubiquitination: substrates interact with PCNA via their PIP-box, and those containing the 'K+4' motif in the PIP box, recruit the DCX(DTL) complex, leading to their degradation. In undamaged proliferating cells, the DCX(DTL) complex also promotes the 'Lys-164' monoubiquitination of PCNA, thereby being involved in PCNA-dependent translesion DNA synthesis. The DDB1-CUL4A-DTL E3 ligase complex regulates the circadian clock function by mediating the ubiquitination and degradation of CRY1. The sequence is that of Denticleless protein homolog (Dtl) from Mus musculus (Mouse).